Here is a 295-residue protein sequence, read N- to C-terminus: ATP synthase gamma chain (295 aa).

This sequence belongs to the ATPase gamma chain family. F-type ATPases have 2 components, CF(1) - the catalytic core - and CF(0) - the membrane proton channel. CF(1) has five subunits: alpha(3), beta(3), gamma(1), delta(1), epsilon(1). CF(0) has three main subunits: a, b and c.

Its subcellular location is the cell membrane. Produces ATP from ADP in the presence of a proton gradient across the membrane. The gamma chain is believed to be important in regulating ATPase activity and the flow of protons through the CF(0) complex. The sequence is that of ATP synthase gamma chain from Herpetosiphon aurantiacus (strain ATCC 23779 / DSM 785 / 114-95).